Consider the following 121-residue polypeptide: Small ribosomal subunit protein uS13 (121 aa).

The interval 91–121 is disordered; it reads HRRGLPVRGQNTKNNARTRKGPSKTVAGKKK. Residues 106–121 are compositionally biased toward basic residues; the sequence is ARTRKGPSKTVAGKKK.

It belongs to the universal ribosomal protein uS13 family. In terms of assembly, part of the 30S ribosomal subunit. Forms a loose heterodimer with protein S19. Forms two bridges to the 50S subunit in the 70S ribosome.

Functionally, located at the top of the head of the 30S subunit, it contacts several helices of the 16S rRNA. In the 70S ribosome it contacts the 23S rRNA (bridge B1a) and protein L5 of the 50S subunit (bridge B1b), connecting the 2 subunits; these bridges are implicated in subunit movement. Contacts the tRNAs in the A and P-sites. The sequence is that of Small ribosomal subunit protein uS13 from Listeria monocytogenes serotype 4b (strain CLIP80459).